The following is a 173-amino-acid chain: Co-chaperone protein HscB homolog (173 aa).

Positions 2–74 (NYFELFSLSP…ISRAEHMLSL (73 aa)) constitute a J domain.

Belongs to the HscB family. As to quaternary structure, interacts with HscA and stimulates its ATPase activity.

Co-chaperone involved in the maturation of iron-sulfur cluster-containing proteins. Seems to help targeting proteins to be folded toward HscA. This is Co-chaperone protein HscB homolog from Shewanella loihica (strain ATCC BAA-1088 / PV-4).